We begin with the raw amino-acid sequence, 258 residues long: 5'-nucleotidase SurE (258 aa).

Residues aspartate 8, aspartate 9, serine 40, and asparagine 93 each coordinate a divalent metal cation.

The protein belongs to the SurE nucleotidase family. A divalent metal cation is required as a cofactor.

The protein resides in the cytoplasm. The enzyme catalyses a ribonucleoside 5'-phosphate + H2O = a ribonucleoside + phosphate. In terms of biological role, nucleotidase that shows phosphatase activity on nucleoside 5'-monophosphates. In Afipia carboxidovorans (strain ATCC 49405 / DSM 1227 / KCTC 32145 / OM5) (Oligotropha carboxidovorans), this protein is 5'-nucleotidase SurE.